Consider the following 109-residue polypeptide: U4-lycotoxin-Ls1a (109 aa).

An N-terminal signal peptide occupies residues 1 to 22 (MKVLVLFSVLFLTLFSYSSTEA). The propeptide occupies 23–44 (IDELDSDAEEDMLSLMANEQVR). Positions 45 to 88 (AKACTPRLHDCSHDRHSCCRGELFKDVCYCFYPEGEDKTEVCSC) are knottin domain. 4 disulfides stabilise this stretch: Cys48-Cys63, Cys55-Cys72, Cys62-Cys88, and Cys74-Cys86. The interval 89–108 (QQPKSHKYIEKVVDKAKTVV) is linear cationic cytotoxin domain.

This sequence belongs to the neurotoxin 19 (CSTX) family. 05 (U4-Lctx) subfamily. As to expression, expressed by the venom gland.

It localises to the secreted. In terms of biological role, enhances the high-affinity desensitization of human P2RX3 purinoceptors. This is U4-lycotoxin-Ls1a from Lycosa singoriensis (Wolf spider).